We begin with the raw amino-acid sequence, 534 residues long: EH domain-containing protein 1 (534 aa).

An N-acetylmethionine modification is found at methionine 1. The region spanning 55–286 (FDNKPMVLLV…DLFKDIQSLP (232 aa)) is the Dynamin-type G domain. The segment at 65-72 (GQYSTGKT) is G1 motif. 65-72 (GQYSTGKT) provides a ligand contact to ATP. A G2 motif region spans residues 91-92 (EP). The tract at residues 153–156 (DTPG) is G3 motif. The stretch at 198–227 (DEFSEVIKALKNHEDKIRVVLNKADQIETQ) forms a coiled coil. Residues 219–222 (NKAD) form a G4 motif region. Residue lysine 220 participates in ATP binding. Residue isoleucine 243 is a region of interest, G5 motif. Tryptophan 258 contributes to the ATP binding site. Serine 355 and serine 456 each carry phosphoserine. One can recognise an EH domain in the interval 444–532 (DKPTYDEIFY…PHLIPPSKRR (89 aa)). One can recognise an EF-hand domain in the interval 476 to 511 (LPNTVLGKIWKLADVDKDGLLDDEEFALANHLIKVK). 4 residues coordinate Ca(2+): aspartate 489, aspartate 491, aspartate 493, and glutamate 500.

This sequence belongs to the TRAFAC class dynamin-like GTPase superfamily. Dynamin/Fzo/YdjA family. EHD subfamily. As to quaternary structure, homooligomer, and heterooligomer with EHD2, EHD3 and EHD4, ATP-binding is required for heterooligomerization. Interacts (via EH domain) with MICALL1 (via NPF1 motif); the interaction is direct and recruits EHD1 to membranes. Interacts with RAB35; the interaction is indirect through MICALL1 and recruits EHD1 to membranes. Interacts (via EH domain) with PACSIN2 (via NPF motifs); regulates localization to tubular recycling endosome membranes. Interacts with PACSIN1. Interacts with RAB8A. Interacts with FER1L5 (via second C2 domain). Interacts with MYOF. Interacts with ZFYVE20. Interacts (via EH domain) with RAB11FIP2.

The protein resides in the recycling endosome membrane. It localises to the early endosome membrane. It is found in the cell membrane. The protein localises to the cell projection. Its subcellular location is the cilium membrane. In terms of biological role, ATP- and membrane-binding protein that controls membrane reorganization/tubulation upon ATP hydrolysis. In vitro causes vesiculation of endocytic membranes. Acts in early endocytic membrane fusion and membrane trafficking of recycling endosomes. Recruited to endosomal membranes upon nerve growth factor stimulation, indirectly regulates neurite outgrowth. Plays a role in myoblast fusion. Involved in the unidirectional retrograde dendritic transport of endocytosed BACE1 and in efficient sorting of BACE1 to axons implicating a function in neuronal APP processing. Plays a role in the formation of the ciliary vesicle (CV), an early step in cilium biogenesis. Proposed to be required for the fusion of distal appendage vesicles (DAVs) to form the CV by recruiting SNARE complex component SNAP29. Is required for recruitment of transition zone proteins CEP290, RPGRIP1L, TMEM67 and B9D2, and of IFT20 following DAV reorganization before Rab8-dependent ciliary membrane extension. Required for the loss of CCP110 form the mother centriole essential for the maturation of the basal body during ciliogenesis. The chain is EH domain-containing protein 1 from Rattus norvegicus (Rat).